The sequence spans 228 residues: Glycosylphosphatidylinositol-anchored high density lipoprotein-binding protein 1 (228 aa).

Positions 1–22 are cleaved as a signal peptide; the sequence is MKALRAVLLILLLSGQPGSGWA. The tract at residues 21–32 is disordered; sequence WAQEDGDADPEP. The tract at residues 24 to 48 is important for LPL transport to the lumenal surface of endothelial cells; the sequence is EDGDADPEPENYNYDDDDDEEEEEE. Acidic residues predominate over residues 24–49; the sequence is EDGDADPEPENYNYDDDDDEEEEEET. Tyr35 is modified (sulfotyrosine). The region spanning 61 to 148 is the UPAR/Ly6 domain; sequence LQCYFCQVLH…PWQNPQVQNP (88 aa). 5 cysteine pairs are disulfide-bonded: Cys63/Cys88, Cys66/Cys75, Cys81/Cys109, Cys113/Cys129, and Cys130/Cys135. Asn76 is a glycosylation site (N-linked (GlcNAc...) asparagine). Residues 102–108 form an important for interaction with LPL region; that stretch reads LTTYSMW. The disordered stretch occupies residues 145 to 200; that stretch reads VQNPLGGRADSPLESGTRHPQGGKFSHPQVVKAAHPQSDGANLPKSGKANQPQGSG. Gly198 carries GPI-anchor amidated glycine lipidation. Residues 199–228 constitute a propeptide, removed in mature form; that stretch reads SGAGYPSGWTKFGNIALLLSFFTCLWASGA.

In terms of assembly, mostly monomer, but also homodimer and homooligomer. Interacts with lipoprotein lipase (LPL). Interacts with high affinity with high-density lipoprotein (HDL). Interacts with chylomicrons. Interacts with APOA5. Post-translationally, glycosylation of Asn-76 is critical for cell surface localization. In terms of processing, sulfation of a Tyr in the N-terminal acidic region increases the affinity for LPL. In terms of tissue distribution, detected in fat tissue. Detected on the luminal surface of capillary endothelial cells in heart, skeletal muscle and brown adipose tissue (at protein level). Detected in heart and brown adipose tissue. Expressed at lower levels in lung and liver.

The protein resides in the apical cell membrane. It localises to the basolateral cell membrane. The protein localises to the cell membrane. In terms of biological role, mediates the transport of lipoprotein lipase LPL from the basolateral to the apical surface of endothelial cells in capillaries. Anchors LPL on the surface of endothelial cells in the lumen of blood capillaries. Thereby, plays an important role in lipolytic processing of chylomicrons by LPL, triglyceride metabolism and lipid homeostasis. Binds chylomicrons and phospholipid particles that contain APOA5. Binds high-density lipoprotein (HDL) and plays a role in the uptake of lipids from HDL. The sequence is that of Glycosylphosphatidylinositol-anchored high density lipoprotein-binding protein 1 from Mus musculus (Mouse).